Consider the following 338-residue polypeptide: Oxygen-dependent coproporphyrinogen-III oxidase (338 aa).

Position 104 (S104) interacts with substrate. Residues H108 and H118 each contribute to the a divalent metal cation site. H118 (proton donor) is an active-site residue. 120–122 (NYR) is a binding site for substrate. Residues H152 and H182 each contribute to the a divalent metal cation site. The segment at 274–309 (YVEFNLVYDRGTIFGLQTNGRTESILMSLPPLVRWE) is important for dimerization.

This sequence belongs to the aerobic coproporphyrinogen-III oxidase family. In terms of assembly, homodimer. The cofactor is a divalent metal cation.

It localises to the cytoplasm. The catalysed reaction is coproporphyrinogen III + O2 + 2 H(+) = protoporphyrinogen IX + 2 CO2 + 2 H2O. It functions in the pathway porphyrin-containing compound metabolism; protoporphyrin-IX biosynthesis; protoporphyrinogen-IX from coproporphyrinogen-III (O2 route): step 1/1. Involved in the heme and chlorophyll biosynthesis. Catalyzes the aerobic oxidative decarboxylation of propionate groups of rings A and B of coproporphyrinogen-III to yield the vinyl groups in protoporphyrinogen-IX. This chain is Oxygen-dependent coproporphyrinogen-III oxidase, found in Thermosynechococcus vestitus (strain NIES-2133 / IAM M-273 / BP-1).